The chain runs to 199 residues: Recombination protein RecR (199 aa).

The C4-type zinc-finger motif lies at 56 to 71; the sequence is CRSCFNVAQSELCRIC. In terms of domain architecture, Toprim spans 79–174; it reads ALICVVEEPK…RVTRLASGLP (96 aa).

This sequence belongs to the RecR family.

May play a role in DNA repair. It seems to be involved in an RecBC-independent recombinational process of DNA repair. It may act with RecF and RecO. The sequence is that of Recombination protein RecR from Frankia alni (strain DSM 45986 / CECT 9034 / ACN14a).